Here is a 1043-residue protein sequence, read N- to C-terminus: Calcium-transporting ATPase 1, plasma membrane-type (1043 aa).

Residues 1 to 178 lie on the Cytoplasmic side of the membrane; the sequence is MSFIRKKSME…FLWDASQDMT (178 aa). 2 helical membrane-spanning segments follow: residues 179-199 and 202-222; these read LLLL…TEGW and GMYD…ITAA. The Cytoplasmic portion of the chain corresponds to 223-258; sequence SDYKQSLQFRDLDKEKKKIDVQVTRDGYRQKVSIYD. 2 consecutive transmembrane segments (helical) span residues 259-279 and 356-376; these read IVVG…DGLF and VATI…TVLM. The Cytoplasmic segment spans residues 377–395; it reads ARFLLGKAGAPGGLLRWRM. The helical transmembrane segment at 396–416 threads the bilayer; that stretch reads VDALAVLNFFAVAVTIIVVAV. Residue Asp460 is the 4-aspartylphosphate intermediate of the active site. Positions 761 and 765 each coordinate Mg(2+). Residues 824–844 traverse the membrane as a helical segment; the sequence is LTVNVVALMVNFISASFTGSA. Position 845 (Pro845) is a topological domain, cytoplasmic. A run of 2 helical transmembrane segments spans residues 846–866 and 891–911; these read LTIV…ALAL and VMWR…GVLL. Residues 912-955 are Cytoplasmic-facing; that stretch reads LRGKSLLQINGPQADSLLNTFVFNTFVFCQVFNEVNSREMEKIN. The next 2 membrane-spanning stretches (helical) occupy residues 956-976 and 998-1018; these read VFSG…TAGF and WLTS…LKCI. At 1019-1043 the chain is on the cytoplasmic side; the sequence is PVESGSDASDRHDGYRPIPTGPSAV. A disordered region spans residues 1023–1043; that stretch reads GSDASDRHDGYRPIPTGPSAV.

This sequence belongs to the cation transport ATPase (P-type) (TC 3.A.3) family. Type IIB subfamily.

The protein localises to the membrane. The enzyme catalyses Ca(2+)(in) + ATP + H2O = Ca(2+)(out) + ADP + phosphate + H(+). Its activity is regulated as follows. Activated by calmodulin. Its function is as follows. This magnesium-dependent enzyme catalyzes the hydrolysis of ATP coupled with the translocation of calcium from the cytosol out of the cell, into the endoplasmic reticulum, or into organelles. The protein is Calcium-transporting ATPase 1, plasma membrane-type of Oryza sativa subsp. japonica (Rice).